The following is a 321-amino-acid chain: tRNA-dihydrouridine synthase B (321 aa).

FMN is bound by residues 16–18 (PMA) and Gln-70. Catalysis depends on Cys-100, which acts as the Proton donor. FMN is bound by residues Lys-139, 200-202 (NGD), and 224-225 (GR).

It belongs to the Dus family. DusB subfamily. FMN is required as a cofactor.

It catalyses the reaction a 5,6-dihydrouridine in tRNA + NAD(+) = a uridine in tRNA + NADH + H(+). The enzyme catalyses a 5,6-dihydrouridine in tRNA + NADP(+) = a uridine in tRNA + NADPH + H(+). Catalyzes the synthesis of 5,6-dihydrouridine (D), a modified base found in the D-loop of most tRNAs, via the reduction of the C5-C6 double bond in target uridines. In Shigella flexneri, this protein is tRNA-dihydrouridine synthase B.